The following is a 437-amino-acid chain: Enolase-related protein 1 (437 aa).

2 residues coordinate substrate: histidine 160 and glutamate 169. Glutamate 212 serves as the catalytic Proton donor. The Mg(2+) site is built by aspartate 247, glutamate 296, and aspartate 321. The substrate site is built by glutamate 296 and aspartate 321. Residue lysine 346 is the Proton acceptor of the active site. Substrate-binding positions include 373–376 and lysine 397; that span reads SHRS.

The protein belongs to the enolase family. Requires Mg(2+) as cofactor.

The catalysed reaction is (2R)-2-phosphoglycerate = phosphoenolpyruvate + H2O. The protein operates within carbohydrate degradation; glycolysis; pyruvate from D-glyceraldehyde 3-phosphate: step 4/5. This is Enolase-related protein 1 (ERR1) from Saccharomyces cerevisiae (strain ATCC 204508 / S288c) (Baker's yeast).